The chain runs to 1378 residues: Hybrid signal transduction histidine kinase H (1378 aa).

Residues 212–242 are a coiled coil; that stretch reads KEKFKKEELINDFKSRLETLENKIDQRVDER. The region spanning 243–314 is the PAS domain; the sequence is IETRFKYVLE…NNNNNNNNNN (72 aa). Positions 294–337 are disordered; it reads YQQHNNNNNNNNNNNNNNNNNNNNNSNNKSPIINSPNTTSPTNT. Over residues 298–337 the composition is skewed to low complexity; sequence NNNNNNNNNNNNNNNNNNNNNSNNKSPIINSPNTTSPTNT. The Histidine kinase domain occupies 498 to 805; it reads TMSHEMRTPL…SFHFLVEVFF (308 aa). Position 501 is a phosphohistidine; by autocatalysis (His-501). The segment covering 663 to 696 has biased composition (low complexity); that stretch reads NNSNNSNNNHNHNNNNNNNNHLNCSGSFNNNGFN. 3 disordered regions span residues 663-717, 905-924, and 1103-1213; these read NNSN…DKHC, TNNNNSNNDNNNNNTTSTTT, and NNSN…HPNP. Over residues 697-714 the composition is skewed to basic residues; it reads HGHHHHHHHHHHHHHHHD. Low complexity-rich tracts occupy residues 1103–1119 and 1136–1187; these read NNSNNNINNNNNNSGSS and SPSL…NNNN. Positions 1188–1206 are enriched in polar residues; sequence LNHYNSDSILSSDLSPQQH. A Response regulatory domain is found at 1244 to 1364; that stretch reads KIMVAEDSLV…ILAVELKRAW (121 aa). 4-aspartylphosphate is present on Asp-1297.

In terms of processing, activation probably requires transfer of a phosphate group between a histidine in the kinase core (transmitter) domain and an aspartate of the receiver domain.

It carries out the reaction ATP + protein L-histidine = ADP + protein N-phospho-L-histidine.. Functionally, acts as a receptor histidine kinase for a signal transduction pathway. This protein undergoes an ATP-dependent autophosphorylation at a conserved histidine residue in the kinase core, and a phosphoryl group is then transferred to a conserved aspartate residue in the receiver domain. The protein is Hybrid signal transduction histidine kinase H (dhkH) of Dictyostelium discoideum (Social amoeba).